The following is a 273-amino-acid chain: Shikimate dehydrogenase (NADP(+)) (273 aa).

Shikimate-binding positions include 15-17 and Thr62; that span reads SKS. The active-site Proton acceptor is the Lys66. Glu78 lines the NADP(+) pocket. 2 residues coordinate shikimate: Asn87 and Asp103. Residues 127–131, 150–155, and Met213 each bind NADP(+); these read GAGGA and NRTQEK. Shikimate is bound at residue Tyr215. Gly237 provides a ligand contact to NADP(+).

The protein belongs to the shikimate dehydrogenase family. Homodimer.

It catalyses the reaction shikimate + NADP(+) = 3-dehydroshikimate + NADPH + H(+). Its pathway is metabolic intermediate biosynthesis; chorismate biosynthesis; chorismate from D-erythrose 4-phosphate and phosphoenolpyruvate: step 4/7. Functionally, involved in the biosynthesis of the chorismate, which leads to the biosynthesis of aromatic amino acids. Catalyzes the reversible NADPH linked reduction of 3-dehydroshikimate (DHSA) to yield shikimate (SA). The protein is Shikimate dehydrogenase (NADP(+)) of Shewanella woodyi (strain ATCC 51908 / MS32).